A 1620-amino-acid polypeptide reads, in one-letter code: NAD-specific glutamate dehydrogenase (1620 aa).

Lys-851 is an active-site residue.

It belongs to the Glu/Leu/Phe/Val dehydrogenases family. As to quaternary structure, homotetramer. In terms of processing, contains disulfide bonds (interchain).

It catalyses the reaction L-glutamate + NAD(+) + H2O = 2-oxoglutarate + NH4(+) + NADH + H(+). Its activity is regulated as follows. Activity subject to allosteric control by arginine and citrate, which function as positive and negative effectors, respectively. Its function is as follows. Involved in arginine catabolism by converting L-glutamate, into 2-oxoglutarate, which is then channeled into the tricarboxylic acid cycle. Can also utilize other amino acids of the glutamate family. The protein is NAD-specific glutamate dehydrogenase (gdhB) of Pseudomonas aeruginosa (strain ATCC 15692 / DSM 22644 / CIP 104116 / JCM 14847 / LMG 12228 / 1C / PRS 101 / PAO1).